The sequence spans 259 residues: Expansin-B4 (259 aa).

The signal sequence occupies residues 1 to 23 (MASSQRYFALLALFAVSLKFCYC). The N-linked (GlcNAc...) asparagine glycan is linked to Asn-25. The 111-residue stretch at 51 to 161 (GGACGYGSAV…KRAACLYRGT (111 aa)) folds into the Expansin-like EG45 domain. 3 cysteine pairs are disulfide-bonded: Cys-54–Cys-83, Cys-86–Cys-156, and Cys-91–Cys-97. Residues 174 to 255 (YYISFVVEYE…NWKPDESYRS (82 aa)) enclose the Expansin-like CBD domain.

The protein belongs to the expansin family. Expansin B subfamily.

The protein resides in the secreted. It localises to the cell wall. It is found in the membrane. May cause loosening and extension of plant cell walls by disrupting non-covalent bonding between cellulose microfibrils and matrix glucans. No enzymatic activity has been found. The sequence is that of Expansin-B4 (EXPB4) from Arabidopsis thaliana (Mouse-ear cress).